A 284-amino-acid polypeptide reads, in one-letter code: Steroidogenic acute regulatory protein, mitochondrial (284 aa).

A mitochondrion-targeting transit peptide spans 1–62 (MLLATFKLCA…RRSSLLGSQL (62 aa)). Phosphoserine; by PKA is present on residues Ser56 and Ser194. In terms of domain architecture, START spans 66 to 279 (LYSEQELSYI…LRKRLESSSA (214 aa)).

In terms of assembly, may interact with TSPO.

Its subcellular location is the mitochondrion. It participates in steroid metabolism; cholesterol metabolism. Its function is as follows. Plays a key role in steroid hormone synthesis by enhancing the metabolism of cholesterol into pregnenolone. Mediates the transfer of cholesterol from the outer mitochondrial membrane to the inner mitochondrial membrane where it is cleaved to pregnenolone. This is Steroidogenic acute regulatory protein, mitochondrial (STAR) from Mesocricetus auratus (Golden hamster).